Reading from the N-terminus, the 365-residue chain is tRNA/tmRNA (uracil-C(5))-methyltransferase (365 aa).

S-adenosyl-L-methionine is bound by residues glutamine 189, tyrosine 217, asparagine 222, glutamate 238, and aspartate 298. Cysteine 323 serves as the catalytic Nucleophile. The active-site Proton acceptor is the glutamate 357.

The protein belongs to the class I-like SAM-binding methyltransferase superfamily. RNA M5U methyltransferase family. TrmA subfamily.

It catalyses the reaction uridine(54) in tRNA + S-adenosyl-L-methionine = 5-methyluridine(54) in tRNA + S-adenosyl-L-homocysteine + H(+). The enzyme catalyses uridine(341) in tmRNA + S-adenosyl-L-methionine = 5-methyluridine(341) in tmRNA + S-adenosyl-L-homocysteine + H(+). In terms of biological role, dual-specificity methyltransferase that catalyzes the formation of 5-methyluridine at position 54 (m5U54) in all tRNAs, and that of position 341 (m5U341) in tmRNA (transfer-mRNA). The chain is tRNA/tmRNA (uracil-C(5))-methyltransferase from Shewanella denitrificans (strain OS217 / ATCC BAA-1090 / DSM 15013).